A 283-amino-acid chain; its full sequence is RNase adapter protein RapZ (283 aa).

Residue 8–15 participates in ATP binding; that stretch reads GRSGSGKS. 56–59 contacts GTP; it reads DVRN. The tract at residues 266 to 283 is RNA-binding; it reads RSRGKNVQSRHRTLEKRK.

This sequence belongs to the RapZ-like family. RapZ subfamily. Homotrimer.

Functionally, modulates the synthesis of GlmS, by affecting the processing and stability of the regulatory small RNA GlmZ. When glucosamine-6-phosphate (GlcN6P) concentrations are high in the cell, RapZ binds GlmZ and targets it to cleavage by RNase E. Consequently, GlmZ is inactivated and unable to activate GlmS synthesis. Under low GlcN6P concentrations, RapZ is sequestered and inactivated by an other regulatory small RNA, GlmY, preventing GlmZ degradation and leading to synthesis of GlmS. The chain is RNase adapter protein RapZ from Photorhabdus laumondii subsp. laumondii (strain DSM 15139 / CIP 105565 / TT01) (Photorhabdus luminescens subsp. laumondii).